The primary structure comprises 213 residues: Imidazole glycerol phosphate synthase subunit HisH (213 aa).

One can recognise a Glutamine amidotransferase type-1 domain in the interval 6–213; the sequence is LVTVIDYGMG…FKNFLNWNGQ (208 aa). Catalysis depends on Cys86, which acts as the Nucleophile. Residues His192 and Glu194 contribute to the active site.

As to quaternary structure, heterodimer of HisH and HisF.

The protein localises to the cytoplasm. It catalyses the reaction 5-[(5-phospho-1-deoxy-D-ribulos-1-ylimino)methylamino]-1-(5-phospho-beta-D-ribosyl)imidazole-4-carboxamide + L-glutamine = D-erythro-1-(imidazol-4-yl)glycerol 3-phosphate + 5-amino-1-(5-phospho-beta-D-ribosyl)imidazole-4-carboxamide + L-glutamate + H(+). The enzyme catalyses L-glutamine + H2O = L-glutamate + NH4(+). The protein operates within amino-acid biosynthesis; L-histidine biosynthesis; L-histidine from 5-phospho-alpha-D-ribose 1-diphosphate: step 5/9. Its function is as follows. IGPS catalyzes the conversion of PRFAR and glutamine to IGP, AICAR and glutamate. The HisH subunit catalyzes the hydrolysis of glutamine to glutamate and ammonia as part of the synthesis of IGP and AICAR. The resulting ammonia molecule is channeled to the active site of HisF. The protein is Imidazole glycerol phosphate synthase subunit HisH of Hydrogenovibrio crunogenus (strain DSM 25203 / XCL-2) (Thiomicrospira crunogena).